We begin with the raw amino-acid sequence, 940 residues long: Testis-expressed protein 11 (940 aa).

The protein belongs to the SPO22 family. In terms of assembly, interacts with SYCP2. Interacts with PBXIP1; may prevent interaction between PBXIP1 and ESR2. Interacts with SHOC1. Interacts with REDIC1. In terms of tissue distribution, testis-specific. Not expressed in adult ovaries.

It is found in the chromosome. Functionally, regulator of crossing-over during meiosis. Involved in initiation and/or maintenance of chromosome synapsis and formation of crossovers. In Homo sapiens (Human), this protein is Testis-expressed protein 11 (TEX11).